We begin with the raw amino-acid sequence, 548 residues long: Probable malate:quinone oxidoreductase (548 aa).

The interval 521-548 is disordered; it reads DKPQAADSTPKPQLKPQPVQKEVADIAL. Residues 530–541 show a composition bias toward low complexity; it reads PKPQLKPQPVQK.

The protein belongs to the MQO family. FAD is required as a cofactor.

It catalyses the reaction (S)-malate + a quinone = a quinol + oxaloacetate. Its pathway is carbohydrate metabolism; tricarboxylic acid cycle; oxaloacetate from (S)-malate (quinone route): step 1/1. The chain is Probable malate:quinone oxidoreductase from Escherichia coli O139:H28 (strain E24377A / ETEC).